The chain runs to 431 residues: Adenylosuccinate synthetase (431 aa).

Residues 12–18 (GDEGKGK) and 40–42 (GHT) each bind GTP. Catalysis depends on aspartate 13, which acts as the Proton acceptor. Positions 13 and 40 each coordinate Mg(2+). Residues 13 to 16 (DEGK), 38 to 41 (NAGH), threonine 128, arginine 142, glutamine 223, threonine 238, and arginine 301 contribute to the IMP site. The active-site Proton donor is histidine 41. 297–303 (TVTGRPR) contacts substrate. Residues arginine 303, 329–331 (SID), and 411–413 (SVG) contribute to the GTP site.

It belongs to the adenylosuccinate synthetase family. In terms of assembly, homodimer. It depends on Mg(2+) as a cofactor.

It localises to the cytoplasm. It catalyses the reaction IMP + L-aspartate + GTP = N(6)-(1,2-dicarboxyethyl)-AMP + GDP + phosphate + 2 H(+). Its pathway is purine metabolism; AMP biosynthesis via de novo pathway; AMP from IMP: step 1/2. Its function is as follows. Plays an important role in the de novo pathway of purine nucleotide biosynthesis. Catalyzes the first committed step in the biosynthesis of AMP from IMP. The sequence is that of Adenylosuccinate synthetase from Lacticaseibacillus paracasei (strain ATCC 334 / BCRC 17002 / CCUG 31169 / CIP 107868 / KCTC 3260 / NRRL B-441) (Lactobacillus paracasei).